Reading from the N-terminus, the 106-residue chain is Serine rich endogenous peptide 7 (106 aa).

The first 26 residues, 1 to 26 (MGKKCSSKFRQMLVLVLLLIVFTCLS), serve as a signal peptide directing secretion. Basic and acidic residues-rich tracts occupy residues 46-56 (GIEDEGQERTH) and 65-77 (RSVE…EGRR). The disordered stretch occupies residues 46–106 (GIEDEGQERT…GGGRIPVAAS (61 aa)). 2 short sequence motifs (SCOOP motif) span residues 58-72 (LNSK…KTHH) and 86-100 (GIRA…GGGR). 2 short sequence motifs (sxS motif essential for MIK2 binding) span residues 64–66 (SRS) and 92–94 (SKS).

Belongs to the serine rich endogenous peptide (SCOOP) phytocytokine family. In terms of assembly, interacts with MIK2 (via extracellular leucine-rich repeat domain); this interaction triggers the formation of complex between MIK2 and the BAK1/SERK3 and SERK4 coreceptors, and subsequent BAK1 activation by phosphorylation. In terms of tissue distribution, mostly expressed in roots, and, to a lower extent, in seedlings shoots.

The protein resides in the cell membrane. It localises to the secreted. Its subcellular location is the extracellular space. The protein localises to the apoplast. In terms of biological role, brassicaceae-specific phytocytokine (plant endogenous peptide released into the apoplast) perceived by MIK2 in a BAK1/SERK3 and SERK4 coreceptors-dependent manner, that modulates various physiological and antimicrobial processes including growth prevention and reactive oxygen species (ROS) response regulation. The sequence is that of Serine rich endogenous peptide 7 from Arabidopsis thaliana (Mouse-ear cress).